Here is a 339-residue protein sequence, read N- to C-terminus: Phenylalanine--tRNA ligase alpha subunit (339 aa).

Glu254 is a Mg(2+) binding site.

This sequence belongs to the class-II aminoacyl-tRNA synthetase family. Phe-tRNA synthetase alpha subunit type 1 subfamily. As to quaternary structure, tetramer of two alpha and two beta subunits. The cofactor is Mg(2+).

The protein localises to the cytoplasm. The catalysed reaction is tRNA(Phe) + L-phenylalanine + ATP = L-phenylalanyl-tRNA(Phe) + AMP + diphosphate + H(+). This Acetivibrio thermocellus (strain ATCC 27405 / DSM 1237 / JCM 9322 / NBRC 103400 / NCIMB 10682 / NRRL B-4536 / VPI 7372) (Clostridium thermocellum) protein is Phenylalanine--tRNA ligase alpha subunit.